A 319-amino-acid polypeptide reads, in one-letter code: Taste receptor type 2 member 7 (319 aa).

The Extracellular segment spans residues 1 to 9; the sequence is MADKVQTTL. Residues 10-30 form a helical membrane-spanning segment; that stretch reads LFLAVGEFSVGILGNAFIGLV. The Cytoplasmic segment spans residues 31-55; sequence NCMDWVKKRKIASIDLILTSLAISR. A helical membrane pass occupies residues 56–76; that stretch reads ICLLCVILLDCFILVLYPDVY. Residues 77-94 are Extracellular-facing; sequence ATGKEMRIIDFFWTLTNH. The helical transmembrane segment at 95 to 115 threads the bilayer; it reads LSIWFATCLSIYYXFRIANFF. Topologically, residues 116–128 are cytoplasmic; that stretch reads HPLFLWMKWRIDR. The chain crosses the membrane as a helical span at residues 129–149; sequence VISWILLGCVVLSVFISLPAT. Topologically, residues 150-187 are extracellular; sequence ENLNADFRFCVKAKRKTNLTWSCRVNKTQHASTKLFLN. Residues asparagine 167 and asparagine 175 are each glycosylated (N-linked (GlcNAc...) asparagine). Residues 188 to 208 traverse the membrane as a helical segment; that stretch reads LATLLPFCVCLMSFFLLILSL. Residues 209-235 lie on the Cytoplasmic side of the membrane; the sequence is RRHIRRMQLSATGCRDPSTEAHVRALK. The helical transmembrane segment at 236–256 threads the bilayer; the sequence is AVISFLLLFIAYYLSFLVATS. At 257–266 the chain is on the extracellular side; sequence SYFMPETELA. A helical membrane pass occupies residues 267 to 287; that stretch reads VIFGESIALIYPSSHSFILIL. Residues 288-319 lie on the Cytoplasmic side of the membrane; it reads GNNKLRHASLKVIWKVMSILKGRKFQQHKQIG.

Belongs to the G-protein coupled receptor T2R family.

Its subcellular location is the membrane. Functionally, gustducin-coupled receptor implicated in the perception of bitter compounds in the oral cavity and the gastrointestinal tract. Signals through PLCB2 and the calcium-regulated cation channel TRPM5. The sequence is that of Taste receptor type 2 member 7 (TAS2R7) from Pan troglodytes (Chimpanzee).